Here is a 607-residue protein sequence, read N- to C-terminus: UvrABC system protein C (607 aa).

Residues 16–94 (GRPGVYRMFD…IKEWRPPYNI (79 aa)) form the GIY-YIG domain. A UVR domain is found at 203-238 (NALTDELSTAMEAAASTLDFEKAAELRDQISLLRRV).

This sequence belongs to the UvrC family. In terms of assembly, interacts with UvrB in an incision complex.

The protein resides in the cytoplasm. Its function is as follows. The UvrABC repair system catalyzes the recognition and processing of DNA lesions. UvrC both incises the 5' and 3' sides of the lesion. The N-terminal half is responsible for the 3' incision and the C-terminal half is responsible for the 5' incision. This chain is UvrABC system protein C, found in Pseudomonas fluorescens (strain ATCC BAA-477 / NRRL B-23932 / Pf-5).